Reading from the N-terminus, the 188-residue chain is Glutamyl endopeptidase 2 (188 aa).

Cys-14 and Cys-34 form a disulfide bridge. Residues His-33, Asp-62, and Ser-143 each act as charge relay system in the active site. A disulfide bond links Cys-137 and Cys-163.

This sequence belongs to the peptidase S1 family. In terms of assembly, monomer.

The catalysed reaction is Preferential cleavage: -Glu-|-Xaa- &gt;&gt; -Asp-|-Xaa-. Preference for Pro or Leu at P2 and Phe at P3. Cleavage of -Glu-|-Asp- and -Glu-|-Pro- bonds is slow.. Preferentially cleaves peptide bonds on the carboxyl-terminal side of glutamate. In Streptomyces griseus, this protein is Glutamyl endopeptidase 2 (sprE).